The following is a 144-amino-acid chain: EF-hand calcium-binding domain-containing protein 8 (144 aa).

EF-hand domains are found at residues 52–86 (IHLA…VLSS) and 87–122 (VSDE…EFQG).

The protein is EF-hand calcium-binding domain-containing protein 8 (EFCAB8) of Homo sapiens (Human).